A 316-amino-acid polypeptide reads, in one-letter code: Thymidylate synthase (316 aa).

DUMP-binding positions include arginine 23 and 178–179 (RR). Cysteine 198 acts as the Nucleophile in catalysis. DUMP is bound by residues 218–221 (RSGD), asparagine 229, and 259–261 (HIY). Aspartate 221 serves as a coordination point for (6R)-5,10-methylene-5,6,7,8-tetrahydrofolate. Alanine 315 serves as a coordination point for (6R)-5,10-methylene-5,6,7,8-tetrahydrofolate.

This sequence belongs to the thymidylate synthase family. Bacterial-type ThyA subfamily. In terms of assembly, homodimer.

The protein resides in the cytoplasm. It carries out the reaction dUMP + (6R)-5,10-methylene-5,6,7,8-tetrahydrofolate = 7,8-dihydrofolate + dTMP. It participates in pyrimidine metabolism; dTTP biosynthesis. Its function is as follows. Catalyzes the reductive methylation of 2'-deoxyuridine-5'-monophosphate (dUMP) to 2'-deoxythymidine-5'-monophosphate (dTMP) while utilizing 5,10-methylenetetrahydrofolate (mTHF) as the methyl donor and reductant in the reaction, yielding dihydrofolate (DHF) as a by-product. This enzymatic reaction provides an intracellular de novo source of dTMP, an essential precursor for DNA biosynthesis. In Lactiplantibacillus plantarum (strain ATCC BAA-793 / NCIMB 8826 / WCFS1) (Lactobacillus plantarum), this protein is Thymidylate synthase.